A 404-amino-acid polypeptide reads, in one-letter code: RING-H2 finger protein ATL11 (404 aa).

An N-terminal signal peptide occupies residues 1–36 (MNPKGRTNLNRSIIGGHDHGSILQLLLFLLLLSSHG). The helical transmembrane segment at 64–84 (AILMIVLVSVFFFLGFFSVYI) threads the bilayer. An RING-type; atypical zinc finger spans residues 144 to 186 (CSVCLNEFEDDETLRLIPKCCHVFHPGCIDAWLRSHTTCPLCR). 2 disordered regions span residues 339 to 361 (PYRT…VRAS) and 385 to 404 (VGEN…SNTV).

It belongs to the RING-type zinc finger family. ATL subfamily.

It is found in the membrane. The catalysed reaction is S-ubiquitinyl-[E2 ubiquitin-conjugating enzyme]-L-cysteine + [acceptor protein]-L-lysine = [E2 ubiquitin-conjugating enzyme]-L-cysteine + N(6)-ubiquitinyl-[acceptor protein]-L-lysine.. It participates in protein modification; protein ubiquitination. This Arabidopsis thaliana (Mouse-ear cress) protein is RING-H2 finger protein ATL11 (ATL11).